The sequence spans 257 residues: Phosphonates import ATP-binding protein PhnC (257 aa).

The ABC transporter domain occupies 4 to 248; it reads IEFKDVNKVY…VFNDIYGRKL (245 aa). 37–44 lines the ATP pocket; that stretch reads GLSGAGKS.

The protein belongs to the ABC transporter superfamily. Phosphonates importer (TC 3.A.1.9.1) family. The complex is composed of two ATP-binding proteins (PhnC), two transmembrane proteins (PhnE) and a solute-binding protein (PhnD).

It is found in the cell membrane. The catalysed reaction is phosphonate(out) + ATP + H2O = phosphonate(in) + ADP + phosphate + H(+). In terms of biological role, part of the ABC transporter complex PhnCDE involved in phosphonates import. Responsible for energy coupling to the transport system. This is Phosphonates import ATP-binding protein PhnC from Staphylococcus haemolyticus (strain JCSC1435).